A 360-amino-acid polypeptide reads, in one-letter code: Mannose-1-phosphate guanylyltransferase catalytic subunit beta (360 aa).

Positions lysine 2–proline 222 are substrate-binding domain. Aspartate 110 is a GDP-alpha-D-mannose binding site. Aspartate 110 serves as a coordination point for Mg(2+). The active site involves lysine 162. Aspartate 218 contributes to the GDP-alpha-D-mannose binding site. The segment at tyrosine 245 to methionine 360 is hexapeptide repeat domain.

The protein belongs to the transferase hexapeptide repeat family. As to quaternary structure, component of the GMPPA-GMPPB mannose-1-phosphate guanylyltransferase complex composed of 4 GMPPA subunits and 8 GMPPB subunits; the complex is organized into three layers, a central layer made up of 2 GMPPA dimers sandwiched between two layers each made up of 2 GMPPB dimers. GMPPB catalytic activity is reduced when part of the complex and binding of GDP-alpha-D-Mannose by GMPPA induces allosteric feedback inhibition of GMPPB. It depends on Mg(2+) as a cofactor.

The protein localises to the cytoplasm. It carries out the reaction alpha-D-mannose 1-phosphate + GTP + H(+) = GDP-alpha-D-mannose + diphosphate. It functions in the pathway nucleotide-sugar biosynthesis; GDP-alpha-D-mannose biosynthesis; GDP-alpha-D-mannose from alpha-D-mannose 1-phosphate (GTP route): step 1/1. Its activity is regulated as follows. Enzyme activity is reduced by incorporation into the GMPPA-GMPPB mannose-1-phosphate guanylyltransferase complex. Allosterically inhibited, when part of the GMPPA-GMPPB complex, by GDP-alpha-D-mannose binding to GMPPA. Catalytic subunit of the GMPPA-GMPPB mannose-1-phosphate guanylyltransferase complex. Catalyzes the formation of GDP-mannose, an essential precursor of glycan moieties of glycoproteins and glycolipids. Can catalyze the reverse reaction in vitro. Together with GMPPA regulates GDP-alpha-D-mannose levels. The protein is Mannose-1-phosphate guanylyltransferase catalytic subunit beta of Mus musculus (Mouse).